We begin with the raw amino-acid sequence, 160 residues long: Transcription elongation factor GreA (160 aa).

A coiled-coil region spans residues 49 to 75; that stretch reads SEYDEAKNDQAFTEGRIIQLENMLKNA.

Belongs to the GreA/GreB family.

Its function is as follows. Necessary for efficient RNA polymerase transcription elongation past template-encoded arresting sites. The arresting sites in DNA have the property of trapping a certain fraction of elongating RNA polymerases that pass through, resulting in locked ternary complexes. Cleavage of the nascent transcript by cleavage factors such as GreA or GreB allows the resumption of elongation from the new 3'terminus. GreA releases sequences of 2 to 3 nucleotides. This is Transcription elongation factor GreA from Clostridium beijerinckii (strain ATCC 51743 / NCIMB 8052) (Clostridium acetobutylicum).